Here is a 229-residue protein sequence, read N- to C-terminus: Imidazoleglycerol-phosphate dehydratase (229 aa).

Belongs to the imidazoleglycerol-phosphate dehydratase family.

It carries out the reaction D-erythro-1-(imidazol-4-yl)glycerol 3-phosphate = 3-(imidazol-4-yl)-2-oxopropyl phosphate + H2O. Its pathway is amino-acid biosynthesis; L-histidine biosynthesis; L-histidine from 5-phospho-alpha-D-ribose 1-diphosphate: step 6/9. The polypeptide is Imidazoleglycerol-phosphate dehydratase (Neurospora crassa (strain ATCC 24698 / 74-OR23-1A / CBS 708.71 / DSM 1257 / FGSC 987)).